Here is a 222-residue protein sequence, read N- to C-terminus: Gamma-glutamyl cyclotransferase gliK (222 aa).

2 consecutive transmembrane segments (helical) span residues 154–174 (GWWFQLGVALFLWPWTRAAII) and 187–207 (GHVPAWFLFIFDCLLWLMWAQ).

This sequence belongs to the class-I pyridoxal-phosphate-dependent aminotransferase family.

It is found in the membrane. The enzyme catalyses an alpha-(gamma-L-glutamyl)-L-amino acid = 5-oxo-L-proline + an L-alpha-amino acid. It participates in secondary metabolite biosynthesis. Its function is as follows. Gamma-glutamyl cyclotransferase; part of the gene cluster that mediates the biosynthesis of an unusual class of epipolythiodioxopiperazines (ETPs) lacking the reactive thiol group important for toxicity. Firstly, L-tyrosine is prenylated by tcpD, before undergoing condensation with L-glycine in a reaction catalyzed by the NRPS tcpP leading to the diketopiperazine (DKP) backbone. Afterwards the alpha-carbon of tyrosine is oxidized by the cytochrome P450 tcpC to form a hydroxyl group. However, in contrast other ETP biosynthesis pathways studied so far, tcpC is not able to bishydroxylate the DKP at both alpha-carbon positions, but hydroxylates the alpha-carbon of the tyrosine part and the nitrogen of the glycine part. The next steps involve an alpha,beta-elimination reaction catalyzed by tcpI, a methylation by the methyltransferase tcpN the action of the four enzyme cascade tcpG/K/J/I. Due to a dysfunctional cytochrome P450 monooxygenase tcpC, the pathway leads to the biosynthesis of probable non-toxic metabolites lacking the reactive thiol group. This is Gamma-glutamyl cyclotransferase gliK from Claviceps purpurea (strain 20.1) (Ergot fungus).